We begin with the raw amino-acid sequence, 74 residues long: Antimicrobial peptide 1 (74 aa).

An N-terminal signal peptide occupies residues 1-22 (MEIKYLLTVFLVLLIGSDYCQA). K40 carries the lysine amide modification. Residues 46-74 (DLDGQIDRSRNFRKRDAELEELLSKLPIY) constitute a propeptide that is removed on maturation.

Expressed by the venom gland.

The protein localises to the secreted. The protein resides in the target cell membrane. Functionally, has antibacterial activity against the Gram-positive bacteria S.aureus (MIC=20 uM), the Gram-negative bacteria E.coli (MIC=150 uM), and the yeast C.albicans (MIC=64 uM). Causes hemolysis on horse erythrocytes. This Androctonus amoreuxi (African fattail scorpion) protein is Antimicrobial peptide 1.